The primary structure comprises 357 residues: cAMP-responsive element modulator (357 aa).

The tract at residues 20–43 (ETVESQQDRSVTRSVAEHSSAHMQ) is disordered. Residues 25-39 (QQDRSVTRSVAEHSS) are compositionally biased toward basic and acidic residues. The KID domain occupies 101–160 (TVQVATIAETDDSADSEVIDSHKRREILSRRPSYRKILNELSSDVPGIPKIEEEKSEEEG). Residues Ser-116, Ser-142, Ser-284, Ser-287, and Ser-290 each carry the phosphoserine modification. The region spanning 299–357 (TRKRELRLMKNREAAKECRRRKKEYVKCLESRVAVLEVQNKKLIEELETLKDICSPKTD) is the bZIP domain. Residues 300–325 (RKRELRLMKNREAAKECRRRKKEYVK) form a basic motif region. Positions 327 to 348 (LESRVAVLEVQNKKLIEELETL) are leucine-zipper.

This sequence belongs to the bZIP family. In terms of assembly, binds DNA as a dimer. Interacts with CDC34. Interacts with FHL5. May interact with TSSK4. Isoform 1 forms a heterodimer with CREB3L4. Post-translationally, stimulated by phosphorylation. Phosphorylated on Ser-116 by TSSK4 in vitro. Ubiquitinated by CDC34 and RAD6B in order to be degraded by the proteasome. In terms of tissue distribution, expressed in the testis.

Its subcellular location is the nucleus. It is found in the cytoplasm. Functionally, transcriptional regulator that binds the cAMP response element (CRE), a sequence present in many viral and cellular promoters. Isoforms are either transcriptional activators or repressors. Isoform 2, isoform 3 and isoform 4 are repressors, while isoform 1 is an activator. Plays a role in spermatogenesis and is involved in spermatid maturation. Binding of isoform 1 (activator) to CRE is increased by CREB3L4. The CREM isoform 1-CREB3L4 heterodimer functions through CRE and may recruit HIRA to CRE to regulate histone exchange. Plays a role in the regulation of the circadian clock: acts as a transcriptional repressor of the core circadian component PER1 by directly binding to cAMP response elements in its promoter. This Mus musculus (Mouse) protein is cAMP-responsive element modulator (Crem).